A 251-amino-acid chain; its full sequence is uncharacterized protein (251 aa).

This is an uncharacterized protein from Methanothermus fervidus.